Here is a 150-residue protein sequence, read N- to C-terminus: D-aminoacyl-tRNA deacylase (150 aa).

The short motif at 136–137 (GP) is the Gly-cisPro motif, important for rejection of L-amino acids element.

It belongs to the DTD family. As to quaternary structure, homodimer.

Its subcellular location is the cytoplasm. The catalysed reaction is glycyl-tRNA(Ala) + H2O = tRNA(Ala) + glycine + H(+). It catalyses the reaction a D-aminoacyl-tRNA + H2O = a tRNA + a D-alpha-amino acid + H(+). In terms of biological role, an aminoacyl-tRNA editing enzyme that deacylates mischarged D-aminoacyl-tRNAs. Also deacylates mischarged glycyl-tRNA(Ala), protecting cells against glycine mischarging by AlaRS. Acts via tRNA-based rather than protein-based catalysis; rejects L-amino acids rather than detecting D-amino acids in the active site. By recycling D-aminoacyl-tRNA to D-amino acids and free tRNA molecules, this enzyme counteracts the toxicity associated with the formation of D-aminoacyl-tRNA entities in vivo and helps enforce protein L-homochirality. In Staphylococcus saprophyticus subsp. saprophyticus (strain ATCC 15305 / DSM 20229 / NCIMB 8711 / NCTC 7292 / S-41), this protein is D-aminoacyl-tRNA deacylase.